Consider the following 35-residue polypeptide: Mu-thomitoxin-Hme1c (35 aa).

3 disulfides stabilise this stretch: Cys-2–Cys-18, Cys-9–Cys-23, and Cys-17–Cys-34.

It belongs to the neurotoxin 07 (Beta/delta-agtx) family. Expressed by the venom gland.

The protein localises to the secreted. Gating-modifier toxin that inhibits mammalian and insect voltage-gated sodium channels. It shifts the voltage dependence of channel activation to more positive voltages. It shows potent activity on Nav1.4/SCN4A (IC(50)=103 nM), Nav1.5/SCN5A (IC(50)=268 nM) and Para/DmNav1 (IC(50)=555 nM) and lower activities on Nav1.2/SCN2A (IC(50)=1447 nM) and Nav1.6/SCN8A (IC(50)=3504 nM). In addition, at a concentration of 1 uM, the toxin inhibits 90-100% of sodium current through Nav1.2/SCN2A, Nav1.4/SCN4A, Nav1.5/SCN5A, Nav1.6/SCN8A and Para/DmNav1 channels, when the voltage of maximal activation of the channel in control conditions is applied. It binds to the S3-S4 helix-loop-helix motif in the voltage-sensing domain of repeat 1 (shown on hNav1.4/SCN4A). The toxin is amphiphilic and binds to both neutral and negatively charged lipid vesicles with high affinity. The hydrophobic face lies on the opposite side to the hydrophobic faces of classical gating modifiers. In Heriaeus mellotteei (Crab spider), this protein is Mu-thomitoxin-Hme1c.